We begin with the raw amino-acid sequence, 106 residues long: Nucleoid-associated protein PD_1058 (106 aa).

Belongs to the YbaB/EbfC family. As to quaternary structure, homodimer.

Its subcellular location is the cytoplasm. It is found in the nucleoid. Its function is as follows. Binds to DNA and alters its conformation. May be involved in regulation of gene expression, nucleoid organization and DNA protection. This Xylella fastidiosa (strain Temecula1 / ATCC 700964) protein is Nucleoid-associated protein PD_1058.